Reading from the N-terminus, the 274-residue chain is Dermonecrotic toxin SdSicTox-betaIIB1bi (274 aa).

Residue His-5 is part of the active site. Mg(2+) contacts are provided by Glu-25 and Asp-27. The active-site Nucleophile is the His-41. Disulfide bonds link Cys-45-Cys-51 and Cys-47-Cys-190. Position 85 (Asp-85) interacts with Mg(2+).

Belongs to the arthropod phospholipase D family. Class II subfamily. The cofactor is Mg(2+). Expressed by the venom gland.

The protein localises to the secreted. It catalyses the reaction an N-(acyl)-sphingosylphosphocholine = an N-(acyl)-sphingosyl-1,3-cyclic phosphate + choline. The enzyme catalyses an N-(acyl)-sphingosylphosphoethanolamine = an N-(acyl)-sphingosyl-1,3-cyclic phosphate + ethanolamine. The catalysed reaction is a 1-acyl-sn-glycero-3-phosphocholine = a 1-acyl-sn-glycero-2,3-cyclic phosphate + choline. It carries out the reaction a 1-acyl-sn-glycero-3-phosphoethanolamine = a 1-acyl-sn-glycero-2,3-cyclic phosphate + ethanolamine. Its function is as follows. Dermonecrotic toxins cleave the phosphodiester linkage between the phosphate and headgroup of certain phospholipids (sphingolipid and lysolipid substrates), forming an alcohol (often choline) and a cyclic phosphate. This toxin acts on sphingomyelin (SM). It may also act on ceramide phosphoethanolamine (CPE), lysophosphatidylcholine (LPC) and lysophosphatidylethanolamine (LPE), but not on lysophosphatidylserine (LPS), and lysophosphatidylglycerol (LPG). It acts by transphosphatidylation, releasing exclusively cyclic phosphate products as second products. Induces dermonecrosis, hemolysis, increased vascular permeability, edema, inflammatory response, and platelet aggregation. The chain is Dermonecrotic toxin SdSicTox-betaIIB1bi from Sicarius cf. damarensis (strain GJB-2008) (Six-eyed sand spider).